A 644-amino-acid chain; its full sequence is Threonine--tRNA ligase (644 aa).

Residues 1-61 (MVAITLPDGS…VADAKVEIVT (61 aa)) form the TGS domain. Residues 242-533 (DHRKIGKALN…LIENYAGWMP (292 aa)) form a catalytic region. Residues cysteine 333, histidine 384, and histidine 510 each coordinate Zn(2+).

Belongs to the class-II aminoacyl-tRNA synthetase family. Homodimer. It depends on Zn(2+) as a cofactor.

The protein localises to the cytoplasm. The catalysed reaction is tRNA(Thr) + L-threonine + ATP = L-threonyl-tRNA(Thr) + AMP + diphosphate + H(+). In terms of biological role, catalyzes the attachment of threonine to tRNA(Thr) in a two-step reaction: L-threonine is first activated by ATP to form Thr-AMP and then transferred to the acceptor end of tRNA(Thr). Also edits incorrectly charged L-seryl-tRNA(Thr). The polypeptide is Threonine--tRNA ligase (Psychrobacter arcticus (strain DSM 17307 / VKM B-2377 / 273-4)).